The following is a 424-amino-acid chain: Interleukin-13 receptor subunit alpha-1 (424 aa).

An N-terminal signal peptide occupies residues 1 to 25 (MARPALLGELLVLLLWTATVGQVAA). Topologically, residues 26-340 (ATEVQPPVTN…QSIGKEQNST (315 aa)) are extracellular. A Fibronectin type-III 1 domain is found at 32 to 121 (PVTNLSVSVE…VKKCISPPEG (90 aa)). 4 N-linked (GlcNAc...) asparagine glycosylation sites follow: Asn35, Asn59, Asn103, and Asn136. The cysteines at positions 44 and 93 are disulfide-linked. Cystine bridges form between Cys132–Cys142 and Cys171–Cys183. The Fibronectin type-III 2 domain maps to 224 to 336 (KPDPPHIKHL…WSEAQSIGKE (113 aa)). Residue Asn262 is glycosylated (N-linked (GlcNAc...) asparagine). Positions 324 to 328 (WSDWS) match the WSXWS motif motif. N-linked (GlcNAc...) asparagine glycosylation is present at Asn338. The chain crosses the membrane as a helical span at residues 341-364 (FYTTMLLTIPVFVAVAVIILLFYL). At 365-424 (KRLKIIIFPPIPDPGKIFKEMFGDQNDDTLHWKKYDIYEKQSKEETDSVVLIENLKKAAP) the chain is on the cytoplasmic side. The Box 1 motif motif lies at 371–379 (IFPPIPDPG).

It belongs to the type I cytokine receptor family. Type 5 subfamily. In terms of assembly, interleukin-13 receptor is a complex of IL4R, IL13RA1, and possibly other components. Interacts with TRAF3IP1. Interacts with IL4. As to expression, spleen, liver, thymus, heart, lung, kidney, testis, stomach, brain, skin, and colon; but not skeletal muscle.

The protein resides in the membrane. In terms of biological role, binds with low affinity to interleukin-13 (IL13). Together with IL4RA can form a functional receptor for IL13. Also serves as an alternate accessory protein to the common cytokine receptor gamma chain for interleukin-4 (IL4) signaling, but cannot replace the function of IL2RG in allowing enhanced interleukin-2 (IL2) binding activity. The protein is Interleukin-13 receptor subunit alpha-1 (Il13ra1) of Mus musculus (Mouse).